Reading from the N-terminus, the 692-residue chain is DNA repair protein RAD34 (692 aa).

Residues 1 to 38 (MAKRLLESSQNDQANRKNSKIEKKEVSFYEEEETDDSF) are disordered. Over residues 28 to 38 (FYEEEETDDSF) the composition is skewed to acidic residues.

Belongs to the XPC family.

It localises to the nucleus. Involved in nucleotide excision repair (NER) of damaged ribosomal DNA (rDNA). Required for the repair of the RNA polymerase I-transcribed strand of rDNA. In Saccharomyces cerevisiae (strain ATCC 204508 / S288c) (Baker's yeast), this protein is DNA repair protein RAD34 (RAD34).